Here is a 293-residue protein sequence, read N- to C-terminus: Homoserine kinase (293 aa).

84–94 (PFSRGLGSSSS) is a binding site for ATP.

Belongs to the GHMP kinase family. Homoserine kinase subfamily.

Its subcellular location is the cytoplasm. The enzyme catalyses L-homoserine + ATP = O-phospho-L-homoserine + ADP + H(+). Its pathway is amino-acid biosynthesis; L-threonine biosynthesis; L-threonine from L-aspartate: step 4/5. Its function is as follows. Catalyzes the ATP-dependent phosphorylation of L-homoserine to L-homoserine phosphate. This Campylobacter fetus subsp. fetus (strain 82-40) protein is Homoserine kinase.